Consider the following 443-residue polypeptide: D-aminoacyl-tRNA deacylase (443 aa).

It belongs to the DtdA deacylase family. Monomer. Requires Zn(2+) as cofactor.

The enzyme catalyses a D-aminoacyl-tRNA + H2O = a tRNA + a D-alpha-amino acid + H(+). It carries out the reaction glycyl-tRNA(Ala) + H2O = tRNA(Ala) + glycine + H(+). Its function is as follows. D-aminoacyl-tRNA deacylase with broad substrate specificity. By recycling D-aminoacyl-tRNA to D-amino acids and free tRNA molecules, this enzyme counteracts the toxicity associated with the formation of D-aminoacyl-tRNA entities in vivo. The protein is D-aminoacyl-tRNA deacylase of Methanocorpusculum labreanum (strain ATCC 43576 / DSM 4855 / Z).